The following is a 231-amino-acid chain: tRNA1(Val) (adenine(37)-N6)-methyltransferase (231 aa).

The protein belongs to the methyltransferase superfamily. tRNA (adenine-N(6)-)-methyltransferase family.

It localises to the cytoplasm. The enzyme catalyses adenosine(37) in tRNA1(Val) + S-adenosyl-L-methionine = N(6)-methyladenosine(37) in tRNA1(Val) + S-adenosyl-L-homocysteine + H(+). Functionally, specifically methylates the adenine in position 37 of tRNA(1)(Val) (anticodon cmo5UAC). The sequence is that of tRNA1(Val) (adenine(37)-N6)-methyltransferase from Flavobacteriaceae bacterium (strain 3519-10).